Here is a 607-residue protein sequence, read N- to C-terminus: Cytosolic Fe-S cluster assembly factor NAR1 (607 aa).

Residues Cys-20, Cys-82, Cys-85, Cys-88, Cys-204, and Cys-259 each coordinate [4Fe-4S] cluster. Residues 430–476 form a disordered region; the sequence is KPNTGKSTNTTTTTTKSKVNPLAARRRARIANNRGKPETKSTSEVNS. Positions 432–447 are enriched in low complexity; that stretch reads NTGKSTNTTTTTTKSK. Positions 496 and 500 each coordinate [4Fe-4S] cluster.

Belongs to the NARF family.

Functionally, component of the cytosolic Fe/S protein assembly machinery. Required for maturation of extramitochondrial Fe/S proteins. May play a role in the transfer of pre-assembled Fe/S clusters to target apoproteins. This is Cytosolic Fe-S cluster assembly factor NAR1 (NAR1) from Candida albicans (strain SC5314 / ATCC MYA-2876) (Yeast).